The primary structure comprises 380 residues: MLQTLHDYFWWERLWLPVNLTWADLEDRDGRVYAKASDLYITLPLALLFLIIRYFFELYVATPLAALLNVKEKTRLRAPPNPTLEHFYMTSGKQPKQADVELLSRQSGLSGRQVERWFRRRRNQDRPSLLKKFREASWRFTFYLIAFIAGTAVIVDKPWFYDLRKVWEGYPIQSIIPSQYWYYMIELSFYWSLLFSIASDVKRKDFKEQIIHHVATIILISFSWFANYVRAGTLIMALHDSSDYLLESAKMFNYAGWKNTCNNIFIVFAIVFIITRLVILPFWILHCTLVYPLELYPAFFGYYFFNFMMGVLQLLHIFWAYLILRMAHKFITGKVVEDERSDREETESSEGEEAAAGGGAKNRPLANGHPILNNNHRKND.

At 1–40 the chain is on the lumenal side; it reads MLQTLHDYFWWERLWLPVNLTWADLEDRDGRVYAKASDLY. Asparagine 19 carries an N-linked (GlcNAc...) asparagine glycan. The chain crosses the membrane as a helical span at residues 41–61; that stretch reads ITLPLALLFLIIRYFFELYVA. The segment at 67–128 is homeobox-like; that stretch reads LLNVKEKTRL…RRRRNQDRPS (62 aa). In terms of domain architecture, TLC spans 131 to 332; sequence KKFREASWRF…ILRMAHKFIT (202 aa). A run of 4 helical transmembrane segments spans residues 140–160, 181–201, 209–229, and 264–284; these read FTFYLIAFIAGTAVIVDKPWF, WYYMIELSFYWSLLFSIASDV, QIIHHVATIILISFSWFANYV, and IFIVFAIVFIITRLVILPFWI. The Last loop motif signature appears at 291–300; that stretch reads YPLELYPAFF. Residues 304–324 traverse the membrane as a helical segment; it reads FFNFMMGVLQLLHIFWAYLIL. The Cytoplasmic portion of the chain corresponds to 325–380; sequence RMAHKFITGKVVEDERSDREETESSEGEEAAAGGGAKNRPLANGHPILNNNHRKND. The segment at 338–380 is disordered; it reads DERSDREETESSEGEEAAAGGGAKNRPLANGHPILNNNHRKND. The residue at position 341 (serine 341) is a Phosphoserine. Acidic residues predominate over residues 344–353; that stretch reads EETESSEGEE. Threonine 346 carries the post-translational modification Phosphothreonine. Serine 348 and serine 349 each carry phosphoserine.

As to quaternary structure, interacts with ATP6V0C, ASGR1, ASGR2 and SLC22A1/OCT1. Interacts with ELOV1, HSD17B12 and TECR. Interacts with NDUFS2. In terms of processing, acetylated. Deacetylation by SIRT3 increases enzyme activity and promotes mitochondrial ceramide accumulation. Post-translationally, phosphorylated at the C-terminus by CK2, leading to increase the ceramide synthase activity.

Its subcellular location is the endoplasmic reticulum membrane. It catalyses the reaction a very long-chain fatty acyl-CoA + a sphingoid base = an N-(very-long-chain fatty acyl)-sphingoid base + CoA + H(+). The catalysed reaction is docosanoyl-CoA + sphinganine = N-docosanoylsphinganine + CoA + H(+). The enzyme catalyses tetracosanoyl-CoA + sphinganine = N-tetracosanoylsphinganine + CoA + H(+). It carries out the reaction hexacosanoyl-CoA + sphinganine = N-hexacosanoylsphinganine + CoA + H(+). It catalyses the reaction (15Z)-tetracosenoyl-CoA + sphinganine = N-(15Z-tetracosenoyl)-sphinganine + CoA + H(+). The catalysed reaction is 2-hydroxytetracosanoyl-CoA + sphinganine = N-(2-hydroxytetracosanoyl)-sphinganine + CoA + H(+). The enzyme catalyses 2-hydroxydocosanoyl-CoA + sphinganine = N-(2-hydroxydocosanoyl)-sphinganine + CoA + H(+). It carries out the reaction 2-hydroxytetracosenoyl-CoA + sphinganine = N-(2-hydroxytetracosenoyl)-sphinganine + CoA + H(+). It catalyses the reaction tetracosenoyl-CoA + sphinganine = an N-tetracosenoylsphinganine + CoA + H(+). The catalysed reaction is hexacosenoyl-CoA + sphinganine = N-hexacosenoylsphinganine + CoA + H(+). The enzyme catalyses tetracosanoyl-CoA + sphing-4-enine = N-tetracosanoyl-sphing-4-enine + CoA + H(+). It carries out the reaction tetracosenoyl-CoA + sphing-4-enine = N-(tetracosenoyl)-sphing-4-enine + CoA + H(+). It catalyses the reaction heptadecasphing-4-enine + tetracosanoyl-CoA = N-tetracosanoyl-heptadecasphing-4-enine + CoA + H(+). The catalysed reaction is a fatty acyl-CoA + sphing-4-enine = an N-acylsphing-4-enine + CoA + H(+). The enzyme catalyses sphing-4-enine + hexadecanoyl-CoA = N-hexadecanoylsphing-4-enine + CoA + H(+). It carries out the reaction sphing-4-enine + octadecanoyl-CoA = N-octadecanoylsphing-4-enine + CoA + H(+). It catalyses the reaction eicosanoyl-CoA + sphing-4-enine = N-eicosanoyl-sphing-4-enine + CoA + H(+). The catalysed reaction is sphinganine + hexadecanoyl-CoA = N-hexadecanoylsphinganine + CoA + H(+). The enzyme catalyses sphinganine + octadecanoyl-CoA = N-(octadecanoyl)-sphinganine + CoA + H(+). It carries out the reaction sphinganine + (9Z)-octadecenoyl-CoA = N-(9Z-octadecenoyl)-sphinganine + CoA + H(+). It catalyses the reaction eicosanoyl-CoA + sphinganine = N-eicosanoylsphinganine + CoA + H(+). It participates in lipid metabolism; sphingolipid metabolism. With respect to regulation, ceramide synthase activity is inhibited by sphingosine-1-phosphate. Ceramide synthase that catalyzes the transfer of the acyl chain from acyl-CoA to a sphingoid base, with high selectivity toward very-long-chain fatty acyl-CoA (chain length C22-C27). N-acylates sphinganine and sphingosine bases to form dihydroceramides and ceramides in de novo synthesis and salvage pathways, respectively. Plays a non-redundant role in the synthesis of ceramides with very-long-chain fatty acids in kidney, liver and brain. Regulates the abundance of myelin-specific sphingolipids galactosylceramide and sulfatide that affects myelin sheath architecture and motor neuron functions. The protein is Ceramide synthase 2 of Bos taurus (Bovine).